Here is a 226-residue protein sequence, read N- to C-terminus: Putative uroporphyrinogen-III synthase (226 aa).

It belongs to the uroporphyrinogen-III synthase family.

The catalysed reaction is hydroxymethylbilane = uroporphyrinogen III + H2O. It functions in the pathway porphyrin-containing compound metabolism; protoporphyrin-IX biosynthesis; coproporphyrinogen-III from 5-aminolevulinate: step 3/4. Its function is as follows. Catalyzes cyclization of the linear tetrapyrrole, hydroxymethylbilane, to the macrocyclic uroporphyrinogen III. This chain is Putative uroporphyrinogen-III synthase, found in Archaeoglobus fulgidus (strain ATCC 49558 / DSM 4304 / JCM 9628 / NBRC 100126 / VC-16).